Reading from the N-terminus, the 386-residue chain is Myosin light chain kinase family member 4 (386 aa).

Position 100 is a phosphoserine (Ser-100). The Protein kinase domain occupies 107–361 (VSKSEILGGG…ASEALKHPWL (255 aa)). ATP is bound by residues 113–121 (LGGGRFGQV) and Lys-136. The Proton acceptor role is filled by Asp-227.

Belongs to the protein kinase superfamily. CAMK Ser/Thr protein kinase family.

It catalyses the reaction L-seryl-[protein] + ATP = O-phospho-L-seryl-[protein] + ADP + H(+). The enzyme catalyses L-threonyl-[protein] + ATP = O-phospho-L-threonyl-[protein] + ADP + H(+). The sequence is that of Myosin light chain kinase family member 4 (Mylk4) from Mus musculus (Mouse).